The chain runs to 239 residues: Large ribosomal subunit protein uL30 (239 aa).

The interval 1–22 (MEGVMSEAPQSSIRKKEYEARM) is disordered.

It belongs to the universal ribosomal protein uL30 family.

The protein is Large ribosomal subunit protein uL30 (RPL7) of Encephalitozoon cuniculi (strain GB-M1) (Microsporidian parasite).